The following is a 735-amino-acid chain: 1,4-alpha-glucan branching enzyme GlgB (735 aa).

The Nucleophile role is filled by D418. E471 acts as the Proton donor in catalysis.

This sequence belongs to the glycosyl hydrolase 13 family. GlgB subfamily. In terms of assembly, monomer.

It catalyses the reaction Transfers a segment of a (1-&gt;4)-alpha-D-glucan chain to a primary hydroxy group in a similar glucan chain.. Its pathway is glycan biosynthesis; glycogen biosynthesis. In terms of biological role, catalyzes the formation of the alpha-1,6-glucosidic linkages in glycogen by scission of a 1,4-alpha-linked oligosaccharide from growing alpha-1,4-glucan chains and the subsequent attachment of the oligosaccharide to the alpha-1,6 position. This chain is 1,4-alpha-glucan branching enzyme GlgB, found in Agrobacterium fabrum (strain C58 / ATCC 33970) (Agrobacterium tumefaciens (strain C58)).